A 149-amino-acid polypeptide reads, in one-letter code: Probable conjugal transfer protein TrbE part 1 (149 aa).

Belongs to the TrbE/VirB4 family.

This Sinorhizobium fredii (strain NBRC 101917 / NGR234) protein is Probable conjugal transfer protein TrbE part 1 (trbEA).